The following is a 236-amino-acid chain: Eukaryotic translation initiation factor 3 subunit J (236 aa).

Positions 1–86 (MADDWESAAD…KEEEEQKRLA (86 aa)) are disordered. The span at 28–46 (GEDDDEDVKESWEDEEEKK) shows a compositional bias: acidic residues. Basic and acidic residues-rich tracts occupy residues 47-58 (DEEKPTKTEAPV) and 68-86 (AKLE…KRLA). A coiled-coil region spans residues 61-115 (KPNKALKAKLEEQERLKEEEEQKRLAEMTPEEKLAEKLRLQKIQEESDLKSALET).

It belongs to the eIF-3 subunit J family. Component of the eukaryotic translation initiation factor 3 (eIF-3) complex. The eIF-3 complex interacts with pix.

It is found in the cytoplasm. Component of the eukaryotic translation initiation factor 3 (eIF-3) complex, which is involved in protein synthesis of a specialized repertoire of mRNAs and, together with other initiation factors, stimulates binding of mRNA and methionyl-tRNAi to the 40S ribosome. The eIF-3 complex specifically targets and initiates translation of a subset of mRNAs involved in cell proliferation. The protein is Eukaryotic translation initiation factor 3 subunit J of Drosophila mojavensis (Fruit fly).